The chain runs to 449 residues: 23S rRNA (uracil(1939)-C(5))-methyltransferase RlmD (449 aa).

The TRAM domain maps to 1-66; the sequence is MGRSRHHNKL…AKFDEAKVVE (66 aa). Residues Cys-79, Cys-85, Cys-88, and Cys-169 each contribute to the [4Fe-4S] cluster site. S-adenosyl-L-methionine-binding residues include Gln-280, Phe-309, Asn-314, Glu-330, Asn-357, and Asp-379. Cys-405 functions as the Nucleophile in the catalytic mechanism.

It belongs to the class I-like SAM-binding methyltransferase superfamily. RNA M5U methyltransferase family. RlmD subfamily.

The catalysed reaction is uridine(1939) in 23S rRNA + S-adenosyl-L-methionine = 5-methyluridine(1939) in 23S rRNA + S-adenosyl-L-homocysteine + H(+). In terms of biological role, catalyzes the formation of 5-methyl-uridine at position 1939 (m5U1939) in 23S rRNA. This chain is 23S rRNA (uracil(1939)-C(5))-methyltransferase RlmD, found in Francisella tularensis subsp. novicida (strain U112).